A 215-amino-acid chain; its full sequence is Mediator of RNA polymerase II transcription subunit 20 (215 aa).

The protein belongs to the Mediator complex subunit 20 family. Component of the Mediator complex.

It localises to the nucleus. Functionally, component of the Mediator complex, a coactivator involved in the regulated transcription of nearly all RNA polymerase II-dependent genes. Mediator functions as a bridge to convey information from gene-specific regulatory proteins to the basal RNA polymerase II transcription machinery. Mediator is recruited to promoters by direct interactions with regulatory proteins and serves as a scaffold for the assembly of a functional preinitiation complex with RNA polymerase II and the general transcription factors. The chain is Mediator of RNA polymerase II transcription subunit 20 (SRB2) from Candida glabrata (strain ATCC 2001 / BCRC 20586 / JCM 3761 / NBRC 0622 / NRRL Y-65 / CBS 138) (Yeast).